The sequence spans 122 residues: UPF0102 protein Krad_1407 (122 aa).

The protein belongs to the UPF0102 family.

The chain is UPF0102 protein Krad_1407 from Kineococcus radiotolerans (strain ATCC BAA-149 / DSM 14245 / SRS30216).